Here is a 340-residue protein sequence, read N- to C-terminus: Glycerol-3-phosphate dehydrogenase [NAD(P)+] (340 aa).

NADPH-binding residues include S15, Y16, H36, and K110. K110, G139, and T141 together coordinate sn-glycerol 3-phosphate. Residue A143 participates in NADPH binding. Sn-glycerol 3-phosphate contacts are provided by K195, D248, S258, R259, and N260. K195 (proton acceptor) is an active-site residue. NADPH is bound at residue R259. Residues V283 and E285 each coordinate NADPH.

It belongs to the NAD-dependent glycerol-3-phosphate dehydrogenase family.

The protein resides in the cytoplasm. It carries out the reaction sn-glycerol 3-phosphate + NAD(+) = dihydroxyacetone phosphate + NADH + H(+). The catalysed reaction is sn-glycerol 3-phosphate + NADP(+) = dihydroxyacetone phosphate + NADPH + H(+). The protein operates within membrane lipid metabolism; glycerophospholipid metabolism. In terms of biological role, catalyzes the reduction of the glycolytic intermediate dihydroxyacetone phosphate (DHAP) to sn-glycerol 3-phosphate (G3P), the key precursor for phospholipid synthesis. The polypeptide is Glycerol-3-phosphate dehydrogenase [NAD(P)+] (Baumannia cicadellinicola subsp. Homalodisca coagulata).